The sequence spans 35 residues: Photosystem II reaction center protein M (35 aa).

A helical transmembrane segment spans residues 5 to 25 (IFGLTATALFIIIPTSFLLIL).

Belongs to the PsbM family. As to quaternary structure, PSII is composed of 1 copy each of membrane proteins PsbA, PsbB, PsbC, PsbD, PsbE, PsbF, PsbH, PsbI, PsbJ, PsbK, PsbL, PsbM, PsbT, PsbX, PsbY, PsbZ, Psb30/Ycf12, at least 3 peripheral proteins of the oxygen-evolving complex and a large number of cofactors. It forms dimeric complexes.

The protein localises to the plastid. The protein resides in the chloroplast thylakoid membrane. One of the components of the core complex of photosystem II (PSII). PSII is a light-driven water:plastoquinone oxidoreductase that uses light energy to abstract electrons from H(2)O, generating O(2) and a proton gradient subsequently used for ATP formation. It consists of a core antenna complex that captures photons, and an electron transfer chain that converts photonic excitation into a charge separation. This subunit is found at the monomer-monomer interface. This is Photosystem II reaction center protein M from Tetradesmus obliquus (Green alga).